A 223-amino-acid polypeptide reads, in one-letter code: UPF0441 protein KPN78578_33850 (223 aa).

The interval 165-223 (SYGAAQPGRTMNVPKTAMAPKPATTTTVTRGGFGESVAKQSTMQRSAAGSTSSSRSMGG) is disordered. 2 stretches are compositionally biased toward low complexity: residues 177-193 (VPKT…TTVT) and 209-223 (RSAA…SMGG).

It belongs to the UPF0441 family.

The protein is UPF0441 protein KPN78578_33850 of Klebsiella pneumoniae subsp. pneumoniae (strain ATCC 700721 / MGH 78578).